The chain runs to 166 residues: UPF0304 protein VFMJ11_1926 (166 aa).

Belongs to the UPF0304 family.

In Aliivibrio fischeri (strain MJ11) (Vibrio fischeri), this protein is UPF0304 protein VFMJ11_1926.